The primary structure comprises 111 residues: Large ribosomal subunit protein uL23 (111 aa).

It belongs to the universal ribosomal protein uL23 family. As to quaternary structure, part of the 50S ribosomal subunit. Contacts protein L29, and trigger factor when it is bound to the ribosome.

In terms of biological role, one of the early assembly proteins it binds 23S rRNA. One of the proteins that surrounds the polypeptide exit tunnel on the outside of the ribosome. Forms the main docking site for trigger factor binding to the ribosome. The polypeptide is Large ribosomal subunit protein uL23 (Nitrosospira multiformis (strain ATCC 25196 / NCIMB 11849 / C 71)).